We begin with the raw amino-acid sequence, 530 residues long: Probable histone-arginine methyltransferase CARMER (530 aa).

The SAM-dependent MTase PRMT-type domain occupies 141–450 (ASQYFQFYGY…QSYDVTIDLH (310 aa)). S-adenosyl-L-methionine is bound by residues Gln-154, Arg-163, Gly-187, Glu-209, Glu-238, and Thr-266. Arg-501 carries the post-translational modification Asymmetric dimethylarginine; by autocatalysis.

This sequence belongs to the class I-like SAM-binding methyltransferase superfamily. Protein arginine N-methyltransferase family. In terms of assembly, homodimer. Interacts with EcR. The dimethylated protein is the major form. Present ubiquitously (at protein level). Expressed in the imaginal disks and in larval brains, and to a much lesser degree in the polytene larval tissue such as salivary glands.

It localises to the cytoplasm. The protein resides in the nucleus. It catalyses the reaction L-arginyl-[protein] + 2 S-adenosyl-L-methionine = N(omega),N(omega)-dimethyl-L-arginyl-[protein] + 2 S-adenosyl-L-homocysteine + 2 H(+). Its function is as follows. Methylates (mono- and asymmetric dimethylation) the guanidino nitrogens of arginyl residues in proteins. May methylate histone H3 at 'Arg-17' and activate transcription via chromatin remodeling. Coordinates ecdysone-mediated expression of cell death genes. This is Probable histone-arginine methyltransferase CARMER (Art4) from Drosophila melanogaster (Fruit fly).